A 984-amino-acid chain; its full sequence is Translation initiation factor IF-2 (984 aa).

2 disordered regions span residues 92–267 (KKRT…ERRR) and 280–392 (MNAP…EEHV). Residues 104-123 (PATPEVQPVAEAPAAAPAAP) show a composition bias toward low complexity. The span at 124-177 (RIDEAELARREEEARRQAELIRRQEEELAEKRRLREEAEAREREQAEKAERAEQ) shows a compositional bias: basic and acidic residues. Low complexity predominate over residues 193–235 (DAAAAAPAKEAAKPAAAPVAAAAAAAEQQAADTKLAAQTAATQ). Basic and acidic residues-rich tracts occupy residues 236–267 (AKEDAKAKAAAESKARADEEAARAKDLDERRR) and 291–302 (KAPEKPQPEKAA). The segment covering 310-335 (PAAPAARPGAPAAPGAAAAPGAAGAG) has biased composition (low complexity). A compositionally biased stretch (basic and acidic residues) spans 351-361 (PAKKKEIKTRG). The segment covering 363–375 (ASGGVGRGNWRGG) has biased composition (gly residues). Positions 381 to 392 (GSNDRGGHEEHV) are enriched in basic and acidic residues. In terms of domain architecture, tr-type G spans 484-653 (PRAPVVTVMG…LLQAEVLELK (170 aa)). Residues 493–500 (GHVDHGKT) form a G1 region. A GTP-binding site is contributed by 493 to 500 (GHVDHGKT). A G2 region spans residues 518–522 (GITQH). The interval 539 to 542 (DTPG) is G3. GTP-binding positions include 539 to 543 (DTPGH) and 593 to 596 (NKID). Positions 593–596 (NKID) are G4. The segment at 629–631 (SAK) is G5.

Belongs to the TRAFAC class translation factor GTPase superfamily. Classic translation factor GTPase family. IF-2 subfamily.

The protein resides in the cytoplasm. One of the essential components for the initiation of protein synthesis. Protects formylmethionyl-tRNA from spontaneous hydrolysis and promotes its binding to the 30S ribosomal subunits. Also involved in the hydrolysis of GTP during the formation of the 70S ribosomal complex. The sequence is that of Translation initiation factor IF-2 from Variovorax paradoxus (strain S110).